The primary structure comprises 118 residues: Large ribosomal subunit protein eL18 (118 aa).

Belongs to the eukaryotic ribosomal protein eL18 family.

In Sulfolobus acidocaldarius (strain ATCC 33909 / DSM 639 / JCM 8929 / NBRC 15157 / NCIMB 11770), this protein is Large ribosomal subunit protein eL18 (rpl18e).